The sequence spans 59 residues: UPF0339 protein CC_2965 (59 aa).

It belongs to the UPF0339 family.

The polypeptide is UPF0339 protein CC_2965 (Caulobacter vibrioides (strain ATCC 19089 / CIP 103742 / CB 15) (Caulobacter crescentus)).